Reading from the N-terminus, the 137-residue chain is Large ribosomal subunit protein uL14A (137 aa).

N-acetylserine is present on S2. N6,N6-dimethyllysine; by RKM1 occurs at positions 106 and 110.

This sequence belongs to the universal ribosomal protein uL14 family. As to quaternary structure, component of the large ribosomal subunit (LSU). Mature yeast ribosomes consist of a small (40S) and a large (60S) subunit. The 40S small subunit contains 1 molecule of ribosomal RNA (18S rRNA) and 33 different proteins (encoded by 57 genes). The large 60S subunit contains 3 rRNA molecules (25S, 5.8S and 5S rRNA) and 46 different proteins (encoded by 81 genes). Post-translationally, methylated by RKM1 at 2 different sites, but it is unclear which are the 2 methylated residues among Lys-40, Lys-106 and/or Lys-110.

The protein localises to the cytoplasm. Its function is as follows. Component of the ribosome, a large ribonucleoprotein complex responsible for the synthesis of proteins in the cell. The small ribosomal subunit (SSU) binds messenger RNAs (mRNAs) and translates the encoded message by selecting cognate aminoacyl-transfer RNA (tRNA) molecules. The large subunit (LSU) contains the ribosomal catalytic site termed the peptidyl transferase center (PTC), which catalyzes the formation of peptide bonds, thereby polymerizing the amino acids delivered by tRNAs into a polypeptide chain. The nascent polypeptides leave the ribosome through a tunnel in the LSU and interact with protein factors that function in enzymatic processing, targeting, and the membrane insertion of nascent chains at the exit of the ribosomal tunnel. This is Large ribosomal subunit protein uL14A from Saccharomyces cerevisiae (strain ATCC 204508 / S288c) (Baker's yeast).